A 35-amino-acid chain; its full sequence is Malate dehydrogenase, mitochondrial (35 aa).

Position 7 (asparagine 7) interacts with NAD(+). Arginine 23 contributes to the substrate binding site.

Belongs to the LDH/MDH superfamily. MDH type 1 family. In terms of assembly, homodimer.

It localises to the mitochondrion matrix. It catalyses the reaction (S)-malate + NAD(+) = oxaloacetate + NADH + H(+). The protein is Malate dehydrogenase, mitochondrial of Capsicum annuum var. annuum (Red pepper).